A 143-amino-acid chain; its full sequence is Transcription antitermination protein NusB (143 aa).

Belongs to the NusB family.

In terms of biological role, involved in transcription antitermination. Required for transcription of ribosomal RNA (rRNA) genes. Binds specifically to the boxA antiterminator sequence of the ribosomal RNA (rrn) operons. The chain is Transcription antitermination protein NusB from Dehalococcoides mccartyi (strain CBDB1).